The chain runs to 472 residues: Clampless protein 1 (472 aa).

2 N-linked (GlcNAc...) asparagine glycosylation sites follow: Asn70 and Asn296.

In terms of biological role, required for developmental progression after cells of opposite mating types fuse with one another, essential for processes common to both dikaryotic filament formation and monokaryotic fruiting. A direct target for transcription factors Sxi1-alpha and Sxi2-a. The protein is Clampless protein 1 of Cryptococcus neoformans var. neoformans serotype D (strain B-3501A) (Filobasidiella neoformans).